Consider the following 29-residue polypeptide: Omega-conotoxins GVIIA/GVIIB (29 aa).

Disulfide bonds link cysteine 1/cysteine 16, cysteine 8/cysteine 19, and cysteine 15/cysteine 26. Proline 4 and proline 7 each carry 4-hydroxyproline.

As to expression, expressed by the venom duct.

The protein resides in the secreted. Functionally, omega-conotoxins act at presynaptic membranes, they bind and block voltage-gated calcium channels (Cav). This is Omega-conotoxins GVIIA/GVIIB from Conus geographus (Geography cone).